The chain runs to 107 residues: Nucleoid-associated protein PHZ_c0369 (107 aa).

This sequence belongs to the YbaB/EbfC family. In terms of assembly, homodimer.

Its subcellular location is the cytoplasm. It is found in the nucleoid. Its function is as follows. Binds to DNA and alters its conformation. May be involved in regulation of gene expression, nucleoid organization and DNA protection. The chain is Nucleoid-associated protein PHZ_c0369 from Phenylobacterium zucineum (strain HLK1).